Consider the following 194-residue polypeptide: MFVLSIALLSCTTLCAATTEWWGDLRAHLNPARQAPFYDVTYDEKVNVCPQGLHADAIPEYVYFGTMLATMTVDEHDQCLQKCAEKPRCKAVNFFHPFAYQEKGFCELLTEGQLDNPSLMRPFRKATYYEKIRCRELDDVEDVEEAAPIGSEITEKLPEDMAREKKLDMSKLMKKLSAKVKEFNGGAGGFRAAR.

The first 15 residues, 1 to 15 (MFVLSIALLSCTTLC), serve as a signal peptide directing secretion. Positions 49–134 (CPQGLHADAI…KATYYEKIRC (86 aa)) constitute a PAN domain. 2 disulfide bridges follow: cysteine 49/cysteine 134 and cysteine 79/cysteine 106.

This is an uncharacterized protein from Caenorhabditis elegans.